Consider the following 161-residue polypeptide: pEARLI1-like lipid transfer protein 1 (161 aa).

The first 25 residues, 1–25 (MASKNSASLALFFALNILFFTLTVA), serve as a signal peptide directing secretion. The A-1 repeat unit spans residues 32-39 (PSPKPKPV). A disordered region spans residues 32 to 76 (PSPKPKPVPSPKPKPVQCPPPPRPSVPSPNPRPVTPPRTPGSSGN). A compositionally biased stretch (pro residues) spans 33–70 (SPKPKPVPSPKPKPVQCPPPPRPSVPSPNPRPVTPPRT). Residues 34–49 (PKPKPVPSPKPKPVQC) form a 2 X 8 AA tandem repeats A of P-S-P-K-P-K-P-V region. An A-2 repeat occupies 40–47 (PSPKPKPV).

The protein belongs to the plant LTP family. PEARLI1 subfamily. Self-interacts and binds to DIR1. Interacts with PDLP1.

It localises to the secreted. Its subcellular location is the cell wall. The protein localises to the endoplasmic reticulum. The protein resides in the cell junction. It is found in the plasmodesma. It localises to the plastid. Its subcellular location is the chloroplast. Probable lipid transfer protein (LTP). Seems to control the flowering process and lignin synthesis. Together with DIR1, required for glycerol-3-phosphate- (G3P) and azelaic acid- (AA) induced systemic acquired resistance (SAR). Component of plant systemic immunity involved in priming defenses in a AA-dependent manner, by modulating production and/or translocation of a mobile signal(s) during SAR. Confers resistance to Botrytis cinerea and Pseudomonas syringae pv. tomato DC3000 and PmaDG3. May be involved in induced systemic resistance (ISR) mediated by non-pathogenic bacteria (e.g. P. fluorescens GM30). Prevents electrolyte leakage during freezing damage. The polypeptide is pEARLI1-like lipid transfer protein 1 (AZI1) (Arabidopsis thaliana (Mouse-ear cress)).